The following is a 298-amino-acid chain: Cyanophycinase (298 aa).

Catalysis depends on charge relay system residues Ser155, Glu173, and His197.

Belongs to the peptidase S51 family.

The catalysed reaction is [L-4-(L-arginin-2-N-yl)aspartate](n) + H2O = [L-4-(L-arginin-2-N-yl)aspartate](n-1) + L-4-(L-arginin-2-N-yl)aspartate. In terms of biological role, exopeptidase that catalyzes the hydrolytic cleavage of multi-L-arginyl-poly-L-aspartic acid (cyanophycin; a water-insoluble reserve polymer) into aspartate-arginine dipeptides. The sequence is that of Cyanophycinase (cphB) from Nostoc sp. (strain PCC 7120 / SAG 25.82 / UTEX 2576).